Here is a 348-residue protein sequence, read N- to C-terminus: NADH-quinone oxidoreductase subunit H (348 aa).

The next 8 membrane-spanning stretches (helical) occupy residues 7 to 27 (IWLL…VVLL), 82 to 102 (GVFL…WAVI), 115 to 135 (VGLL…IMGG), 161 to 181 (IGFV…TTIV), 199 to 219 (FLDW…ISAL), 251 to 271 (LFFL…TILF), 287 to 307 (VPGI…FAMV), and 322 to 342 (LGWK…ATFL).

The protein belongs to the complex I subunit 1 family. In terms of assembly, NDH-1 is composed of 14 different subunits. Subunits NuoA, H, J, K, L, M, N constitute the membrane sector of the complex.

Its subcellular location is the cell inner membrane. The catalysed reaction is a quinone + NADH + 5 H(+)(in) = a quinol + NAD(+) + 4 H(+)(out). Its function is as follows. NDH-1 shuttles electrons from NADH, via FMN and iron-sulfur (Fe-S) centers, to quinones in the respiratory chain. The immediate electron acceptor for the enzyme in this species is believed to be ubiquinone. Couples the redox reaction to proton translocation (for every two electrons transferred, four hydrogen ions are translocated across the cytoplasmic membrane), and thus conserves the redox energy in a proton gradient. This subunit may bind ubiquinone. The polypeptide is NADH-quinone oxidoreductase subunit H (Bartonella quintana (strain Toulouse) (Rochalimaea quintana)).